The sequence spans 946 residues: Bifunctional glutamine synthetase adenylyltransferase/adenylyl-removing enzyme (946 aa).

Residues 1 to 440 are adenylyl removase; it reads MKPLSSPLQQ…VFNELIGDDE (440 aa). The segment at 449–946 is adenylyl transferase; the sequence is SEQWRELWQD…ASWQKWLVEE (498 aa).

Belongs to the GlnE family. Mg(2+) is required as a cofactor.

The catalysed reaction is [glutamine synthetase]-O(4)-(5'-adenylyl)-L-tyrosine + phosphate = [glutamine synthetase]-L-tyrosine + ADP. It catalyses the reaction [glutamine synthetase]-L-tyrosine + ATP = [glutamine synthetase]-O(4)-(5'-adenylyl)-L-tyrosine + diphosphate. Involved in the regulation of glutamine synthetase GlnA, a key enzyme in the process to assimilate ammonia. When cellular nitrogen levels are high, the C-terminal adenylyl transferase (AT) inactivates GlnA by covalent transfer of an adenylyl group from ATP to specific tyrosine residue of GlnA, thus reducing its activity. Conversely, when nitrogen levels are low, the N-terminal adenylyl removase (AR) activates GlnA by removing the adenylyl group by phosphorolysis, increasing its activity. The regulatory region of GlnE binds the signal transduction protein PII (GlnB) which indicates the nitrogen status of the cell. In Escherichia coli O8 (strain IAI1), this protein is Bifunctional glutamine synthetase adenylyltransferase/adenylyl-removing enzyme.